The primary structure comprises 482 residues: Aspartyl/glutamyl-tRNA(Asn/Gln) amidotransferase subunit B (482 aa).

It belongs to the GatB/GatE family. GatB subfamily. In terms of assembly, heterotrimer of A, B and C subunits.

It carries out the reaction L-glutamyl-tRNA(Gln) + L-glutamine + ATP + H2O = L-glutaminyl-tRNA(Gln) + L-glutamate + ADP + phosphate + H(+). The catalysed reaction is L-aspartyl-tRNA(Asn) + L-glutamine + ATP + H2O = L-asparaginyl-tRNA(Asn) + L-glutamate + ADP + phosphate + 2 H(+). Its function is as follows. Allows the formation of correctly charged Asn-tRNA(Asn) or Gln-tRNA(Gln) through the transamidation of misacylated Asp-tRNA(Asn) or Glu-tRNA(Gln) in organisms which lack either or both of asparaginyl-tRNA or glutaminyl-tRNA synthetases. The reaction takes place in the presence of glutamine and ATP through an activated phospho-Asp-tRNA(Asn) or phospho-Glu-tRNA(Gln). This chain is Aspartyl/glutamyl-tRNA(Asn/Gln) amidotransferase subunit B, found in Thermotoga petrophila (strain ATCC BAA-488 / DSM 13995 / JCM 10881 / RKU-1).